The primary structure comprises 697 residues: Histone deacetylase HOS3 (697 aa).

Residues 40–440 are histone deacetylase; it reads AKAVVVLSPY…LIGLQNQDWV (401 aa). Histidine 196 is a catalytic residue. A disordered region spans residues 525-573; that stretch reads IRSHRSNASPEKELHENKPRSTEKQEQREIRSDTKVKQLSSNNRAAETQ. The span at 534–560 shows a compositional bias: basic and acidic residues; that stretch reads PEKELHENKPRSTEKQEQREIRSDTKV. The span at 561–573 shows a compositional bias: polar residues; that stretch reads KQLSSNNRAAETQ. Phosphoserine occurs at positions 582, 583, 613, and 629. Residues 625-638 are compositionally biased toward basic and acidic residues; sequence GDEDSDHELKEKNW. Residues 625 to 697 are disordered; it reads GDEDSDHELK…KHTTRSGGRW (73 aa). Residues 665-674 show a composition bias toward polar residues; that stretch reads QPQNANTPTY.

Belongs to the histone deacetylase family. HD type 1 subfamily. In terms of assembly, homodimer.

It localises to the nucleus. It carries out the reaction N(6)-acetyl-L-lysyl-[histone] + H2O = L-lysyl-[histone] + acetate. Its function is as follows. Responsible for the deacetylation of lysine residues on the N-terminal part of the core histones (H2A, H2B, H3 and H4). Histone deacetylation gives a tag for epigenetic repression and plays an important role in transcriptional regulation, cell cycle progression and developmental events. Histone deacetylases act via the formation of large multiprotein complexes. The polypeptide is Histone deacetylase HOS3 (HOS3) (Saccharomyces cerevisiae (strain ATCC 204508 / S288c) (Baker's yeast)).